A 269-amino-acid chain; its full sequence is Phosphatidylglycerol--prolipoprotein diacylglyceryl transferase (269 aa).

Helical transmembrane passes span 10–30 (VALA…LIGI), 56–76 (MVFW…VLFY), 92–112 (WKGG…AWWF), 120–140 (FFEL…AGRI), 174–194 (PSQL…LWLF), 202–222 (MAVS…VEFV), and 237–257 (LTMG…LIWL). R139 provides a ligand contact to a 1,2-diacyl-sn-glycero-3-phospho-(1'-sn-glycerol).

This sequence belongs to the Lgt family.

It is found in the cell inner membrane. It catalyses the reaction L-cysteinyl-[prolipoprotein] + a 1,2-diacyl-sn-glycero-3-phospho-(1'-sn-glycerol) = an S-1,2-diacyl-sn-glyceryl-L-cysteinyl-[prolipoprotein] + sn-glycerol 1-phosphate + H(+). The protein operates within protein modification; lipoprotein biosynthesis (diacylglyceryl transfer). Functionally, catalyzes the transfer of the diacylglyceryl group from phosphatidylglycerol to the sulfhydryl group of the N-terminal cysteine of a prolipoprotein, the first step in the formation of mature lipoproteins. This chain is Phosphatidylglycerol--prolipoprotein diacylglyceryl transferase, found in Pseudomonas fluorescens (strain ATCC BAA-477 / NRRL B-23932 / Pf-5).